A 330-amino-acid polypeptide reads, in one-letter code: Beta-hexosaminidase (330 aa).

Residues D62, R70, R130, and 160–161 each bind substrate; that span reads KH. Catalysis depends on H173, which acts as the Proton donor/acceptor. D242 (nucleophile) is an active-site residue.

It belongs to the glycosyl hydrolase 3 family. NagZ subfamily.

The protein resides in the cytoplasm. It carries out the reaction Hydrolysis of terminal non-reducing N-acetyl-D-hexosamine residues in N-acetyl-beta-D-hexosaminides.. It participates in cell wall biogenesis; peptidoglycan recycling. Plays a role in peptidoglycan recycling by cleaving the terminal beta-1,4-linked N-acetylglucosamine (GlcNAc) from peptide-linked peptidoglycan fragments, giving rise to free GlcNAc, anhydro-N-acetylmuramic acid and anhydro-N-acetylmuramic acid-linked peptides. The protein is Beta-hexosaminidase of Vibrio cholerae serotype O1 (strain ATCC 39541 / Classical Ogawa 395 / O395).